Here is a 253-residue protein sequence, read N- to C-terminus: 2-C-methyl-D-erythritol 4-phosphate cytidylyltransferase (253 aa).

This sequence belongs to the IspD/TarI cytidylyltransferase family. IspD subfamily.

It carries out the reaction 2-C-methyl-D-erythritol 4-phosphate + CTP + H(+) = 4-CDP-2-C-methyl-D-erythritol + diphosphate. The protein operates within isoprenoid biosynthesis; isopentenyl diphosphate biosynthesis via DXP pathway; isopentenyl diphosphate from 1-deoxy-D-xylulose 5-phosphate: step 2/6. Catalyzes the formation of 4-diphosphocytidyl-2-C-methyl-D-erythritol from CTP and 2-C-methyl-D-erythritol 4-phosphate (MEP). In Chlorobium chlorochromatii (strain CaD3), this protein is 2-C-methyl-D-erythritol 4-phosphate cytidylyltransferase.